The sequence spans 63 residues: MLILTRKVGESVLIGDDISITVLSVRGNQVKLGVEAPKEVSVHREEIYQRIKQTKDEPYLASS.

This sequence belongs to the CsrA/RsmA family. As to quaternary structure, homodimer; the beta-strands of each monomer intercalate to form a hydrophobic core, while the alpha-helices form wings that extend away from the core.

The protein resides in the cytoplasm. A key translational regulator that binds mRNA to regulate translation initiation and/or mRNA stability. Mediates global changes in gene expression, shifting from rapid growth to stress survival by linking envelope stress, the stringent response and the catabolite repression systems. Usually binds in the 5'-UTR; binding at or near the Shine-Dalgarno sequence prevents ribosome-binding, repressing translation, binding elsewhere in the 5'-UTR can activate translation and/or stabilize the mRNA. Its function is antagonized by small RNA(s). This chain is Translational regulator CsrA, found in Haemophilus influenzae (strain PittEE).